The sequence spans 620 residues: Lamin-B2 (620 aa).

The interval 1–38 (MSPPSPGRRREQRRPRAAATMATPLPGRAGGPATPLSP) is disordered. Residues 1-48 (MSPPSPGRRREQRRPRAAATMATPLPGRAGGPATPLSPTRLSRLQEKE) form a head region. Thr-23 and Thr-34 each carry phosphothreonine. Residue Ser-37 is modified to Phosphoserine. The 357-residue stretch at 46-402 (EKEELRELND…KLLEGEEERL (357 aa)) folds into the IF rod domain. A coil 1A region spans residues 49–83 (ELRELNDRLAHYIDRVRALELENDRLLLKISEKEE). A Glycyl lysine isopeptide (Lys-Gly) (interchain with G-Cter in SUMO2) cross-link involves residue Lys-77. N6-acetyllysine; alternate is present on Lys-81. A Glycyl lysine isopeptide (Lys-Gly) (interchain with G-Cter in SUMO2); alternate cross-link involves residue Lys-81. Residues 84–95 (VTTREVSGIKAL) form a linker 1 region. Positions 96-229 (YESELADARR…DFRKSVFEEE (134 aa)) are coil 1B. Residues Lys-195 and Lys-255 each participate in a glycyl lysine isopeptide (Lys-Gly) (interchain with G-Cter in SUMO2) cross-link. The segment at 230-256 (VRETRRRHERRLVEVDSSRQQEYDFKM) is linker 2. The coil 2 stretch occupies residues 257 to 400 (AQALEELRSQ…YRKLLEGEEE (144 aa)). Ser-316 and Ser-407 each carry phosphoserine. The tract at residues 399 to 464 (EERLKLSPSP…GTGGSGGFHL (66 aa)) is disordered. Positions 401–620 (RLKLSPSPSS…RTTSRGCYVM (220 aa)) are tail. Over residues 404 to 431 (LSPSPSSRVTVSRATSSSSGSLSATGRL) the composition is skewed to low complexity. Thr-413 is a glycosylation site (O-linked (GlcNAc) threonine). Phosphoserine occurs at positions 420, 422, 424, and 426. Arg-433 is subject to Omega-N-methylarginine. A Nuclear localization signal motif is present at residues 435–440 (KRKRLE). Positions 444–453 (PLGSGPSVLG) are enriched in low complexity. Positions 462–579 (FHLAQQASAS…EEVAMRTVKK (118 aa)) constitute an LTD domain. Lys-489 is covalently cross-linked (Glycyl lysine isopeptide (Lys-Gly) (interchain with G-Cter in SUMO2)). The residue at position 497 (Ser-497) is a Phosphoserine. A disordered region spans residues 581-620 (SVMRENENGEEEEEEAEFGEEDLFHQQGDPRTTSRGCYVM). The span at 588-601 (NGEEEEEEAEFGEE) shows a compositional bias: acidic residues. Positions 609-620 (DPRTTSRGCYVM) are enriched in polar residues. Cys-617 carries the cysteine methyl ester modification. Cys-617 carries the S-farnesyl cysteine lipid modification. Residues 618–620 (YVM) constitute a propeptide, removed in mature form.

It belongs to the intermediate filament family. Dimer. Lamin dimers then assemble into dimeric head-to-tail polymers. Ultimately, two head-to-tail polymers assemble laterally into a protofilament with a uniformly shaped rod of 3.5 nm in diameter. Interacts with TMEM43. Post-translationally, B-type lamins undergo a series of modifications, such as farnesylation and phosphorylation. Increased phosphorylation of the lamins occurs before envelope disintegration and probably plays a role in regulating lamin associations. In terms of processing, phosphorylation plays a key role in lamin organization, subcellular localization and nuclear envelope disintegration. Phosphorylation by CDK1 at Ser-37 and Ser-407 at the onset of mitosis drives lamin disassembly and nuclear envelope breakdown.

The protein localises to the nucleus lamina. Its function is as follows. Lamins are intermediate filament proteins that assemble into a filamentous meshwork, and which constitute the major components of the nuclear lamina, a fibrous layer on the nucleoplasmic side of the inner nuclear membrane. Lamins provide a framework for the nuclear envelope, bridging the nuclear envelope and chromatin, thereby playing an important role in nuclear assembly, chromatin organization, nuclear membrane and telomere dynamics. The structural integrity of the lamina is strictly controlled by the cell cycle, as seen by the disintegration and formation of the nuclear envelope in prophase and telophase, respectively. In Homo sapiens (Human), this protein is Lamin-B2 (LMNB2).